The chain runs to 880 residues: MKKMGLNEIRKLFLDFYEEKEHYVQSSYPLVPHNDKSLLLINAGMAPLKNYFSGVETPPSKRMATCQKCIRTGDIENVGKTSRHATFFEMLGSFAFGDYFKTESIQWGWEFATKYLEMPEDKIWASVYEEDDEAYGIWENQIKMPKERIVRLGKEDNFWEIGVGPCGPCSELYFDRGDKYSCGHDDCKPGCDCDRFVEFWNHVFTQFDKDEAGNYNLLPNPNIDTGMGLERVACIMQDVDSIFEVDTMKHILNSVCTATNTQYNKDVKTNISLRIITDHLRSITFMIGDGILPSNEGRGYVLRRLLRRAARHGKLLGVSKSFLYELMDTVTETYGGAYSELVEKKDYIKKIIQVEEDRFQETIHQGLEILNQHIEEMIGKSENMLNGTYAFKLYDTYGFPLDLTKEILEEREMTVDESEFESEMEKQRNRARKARSGGDTEGWKEDAFDALDKNIQTSFKGYETLRAEGKVLAIIEENQSVNLTSAGKEVVIVLDKTPFYPESGGQIGDIGHIFKDEFEGQVLDTKQGKNQRIHQYIKILRGILQVGDSIQGEVDKEPRHNTERNHTATHLLHKALKGIIGEHVEQAGSLVTPEKLRFDFSHFEGLSSADLSKVELEVNQEILNALNVDTVEASLEEAKKMGAMALFGEKYGDDVRVVKTGDYSVELCGGTHVKNSSEIGTFLILSETGVAAGVRRIEAVTGQEAYHHIKREQGLIQDIESLLKTKGEQLTKRVEELLKETKEKDKELQQLKSKLANQSIDEILNQIEVIEGTNLLVHHFGEQSMEDLRNIGDSLKQKIGSGVIALGAESNDKASFFVTATKDVVEKGVHSGNMIREVAKIAGGGGGGRPDMAQAGGKNPEKIQSALSIVKGLLKNQLNG.

Residues Thr414–Trp443 form a disordered region. Positions 566, 570, 668, and 672 each coordinate Zn(2+).

Belongs to the class-II aminoacyl-tRNA synthetase family. Requires Zn(2+) as cofactor.

The protein localises to the cytoplasm. It catalyses the reaction tRNA(Ala) + L-alanine + ATP = L-alanyl-tRNA(Ala) + AMP + diphosphate. Functionally, catalyzes the attachment of alanine to tRNA(Ala) in a two-step reaction: alanine is first activated by ATP to form Ala-AMP and then transferred to the acceptor end of tRNA(Ala). Also edits incorrectly charged Ser-tRNA(Ala) and Gly-tRNA(Ala) via its editing domain. The polypeptide is Alanine--tRNA ligase (Alkaliphilus metalliredigens (strain QYMF)).